Here is a 479-residue protein sequence, read N- to C-terminus: MTHPVISLKPSYNSVIRGCPGLPDTLPRIECQLRVRSNNSLPFKLVKIEIVLKTIEIYFNKNLYSSNNSSFTPFNRPSDPSNGHSDTSNQNISIHYKKNIVLSHPTHDGDDLNNDLIGIDIPLTIGLPDDIKETNYNPKFGKTQTFLDCTVFYTEVGGGSSNKKRNFLYPVNVERYTYLPSPSYFRPINRSNITSPDQKFLISYSIENPCVSMNNDTLKLSISIRLNPFPNNATTPSSNDFDVSTPTLFSTKKKFKSKLKLKSITTQILEYLEILKNQSEFSSTQTTNILQTSVRQVDQIISMNSMIFQFNLKIFTKDKILQSFRSSESSCPETKVLINKIDDIPLQYHSSITTIGQHFNVSHYLSIRFKFNKSLKNFEINHPLIISFWSVSQLPLIENLILQERQTAKFAKKFYKNFGRIKNTSNNNNSSNCLEYPSLPPIIYNFNDPETNNRFNILYSQKDPSRTDPSKLRRVPVIQ.

A disordered region spans residues 460-479; it reads SQKDPSRTDPSKLRRVPVIQ.

Functionally, regulator of RHO1 signaling that acts as a cofactor required for the efficient localization of the TUS1 GTP exchange factor (GEF) for RHO1 to the bud neck during all phases of cytokinesis. RHO1 is a key, essential hub protein in the cell wall integrity (CWI) pathway in which activated RHO1-GTP binds directly to and activates multiple different downstream effectors required for cell wall synthesis and actin assembly during cytokinesis. The polypeptide is RHO1 GEF localizing protein 1 (Saccharomyces cerevisiae (strain ATCC 204508 / S288c) (Baker's yeast)).